The sequence spans 275 residues: 3-methyl-2-oxobutanoate hydroxymethyltransferase (275 aa).

Residues D49 and D88 each coordinate Mg(2+). 3-methyl-2-oxobutanoate contacts are provided by residues 49–50, D88, and K118; that span reads DS. A Mg(2+)-binding site is contributed by E120. The active-site Proton acceptor is E187.

This sequence belongs to the PanB family. In terms of assembly, homodecamer; pentamer of dimers. Mg(2+) is required as a cofactor.

Its subcellular location is the cytoplasm. It carries out the reaction 3-methyl-2-oxobutanoate + (6R)-5,10-methylene-5,6,7,8-tetrahydrofolate + H2O = 2-dehydropantoate + (6S)-5,6,7,8-tetrahydrofolate. The protein operates within cofactor biosynthesis; (R)-pantothenate biosynthesis; (R)-pantoate from 3-methyl-2-oxobutanoate: step 1/2. In terms of biological role, catalyzes the reversible reaction in which hydroxymethyl group from 5,10-methylenetetrahydrofolate is transferred onto alpha-ketoisovalerate to form ketopantoate. The protein is 3-methyl-2-oxobutanoate hydroxymethyltransferase of Hyphomonas neptunium (strain ATCC 15444).